The chain runs to 53 residues: Large ribosomal subunit protein eL40 (53 aa).

This sequence belongs to the eukaryotic ribosomal protein eL40 family.

The polypeptide is Large ribosomal subunit protein eL40 (Pyrobaculum islandicum (strain DSM 4184 / JCM 9189 / GEO3)).